Consider the following 151-residue polypeptide: Ribosome maturation factor RimP (151 aa).

This sequence belongs to the RimP family.

Its subcellular location is the cytoplasm. Its function is as follows. Required for maturation of 30S ribosomal subunits. This Colwellia psychrerythraea (strain 34H / ATCC BAA-681) (Vibrio psychroerythus) protein is Ribosome maturation factor RimP.